The sequence spans 302 residues: 4-hydroxy-tetrahydrodipicolinate synthase (302 aa).

A pyruvate-binding site is contributed by T55. Y143 acts as the Proton donor/acceptor in catalysis. Residue K171 is the Schiff-base intermediate with substrate of the active site. Pyruvate is bound at residue I213.

It belongs to the DapA family. In terms of assembly, homotetramer; dimer of dimers.

It is found in the cytoplasm. The enzyme catalyses L-aspartate 4-semialdehyde + pyruvate = (2S,4S)-4-hydroxy-2,3,4,5-tetrahydrodipicolinate + H2O + H(+). The protein operates within amino-acid biosynthesis; L-lysine biosynthesis via DAP pathway; (S)-tetrahydrodipicolinate from L-aspartate: step 3/4. Functionally, catalyzes the condensation of (S)-aspartate-beta-semialdehyde [(S)-ASA] and pyruvate to 4-hydroxy-tetrahydrodipicolinate (HTPA). The protein is 4-hydroxy-tetrahydrodipicolinate synthase of Psychrobacter sp. (strain PRwf-1).